A 635-amino-acid polypeptide reads, in one-letter code: 1-deoxy-D-xylulose-5-phosphate synthase (635 aa).

Residues His-76 and 117–119 each bind thiamine diphosphate; that span reads GHS. Asp-148 contributes to the Mg(2+) binding site. Thiamine diphosphate contacts are provided by residues 149-150, Asn-177, Tyr-294, and Glu-379; that span reads GA. Asn-177 contacts Mg(2+).

The protein belongs to the transketolase family. DXPS subfamily. Homodimer. Requires Mg(2+) as cofactor. It depends on thiamine diphosphate as a cofactor.

The enzyme catalyses D-glyceraldehyde 3-phosphate + pyruvate + H(+) = 1-deoxy-D-xylulose 5-phosphate + CO2. It functions in the pathway metabolic intermediate biosynthesis; 1-deoxy-D-xylulose 5-phosphate biosynthesis; 1-deoxy-D-xylulose 5-phosphate from D-glyceraldehyde 3-phosphate and pyruvate: step 1/1. In terms of biological role, catalyzes the acyloin condensation reaction between C atoms 2 and 3 of pyruvate and glyceraldehyde 3-phosphate to yield 1-deoxy-D-xylulose-5-phosphate (DXP). In Neisseria meningitidis serogroup C (strain 053442), this protein is 1-deoxy-D-xylulose-5-phosphate synthase.